The following is a 278-amino-acid chain: 4-deoxy-L-threo-5-hexosulose-uronate ketol-isomerase (278 aa).

Zn(2+) is bound by residues histidine 196, histidine 198, glutamate 203, and histidine 245.

This sequence belongs to the KduI family. It depends on Zn(2+) as a cofactor.

The catalysed reaction is 5-dehydro-4-deoxy-D-glucuronate = 3-deoxy-D-glycero-2,5-hexodiulosonate. It participates in glycan metabolism; pectin degradation; 2-dehydro-3-deoxy-D-gluconate from pectin: step 4/5. Catalyzes the isomerization of 5-dehydro-4-deoxy-D-glucuronate to 3-deoxy-D-glycero-2,5-hexodiulosonate. In Shigella flexneri, this protein is 4-deoxy-L-threo-5-hexosulose-uronate ketol-isomerase.